The following is a 465-amino-acid chain: Protein hedgehog (465 aa).

C79 carries the N-palmitoyl cysteine lipid modification. E143, E144, D149, T179, E180, D183, and D185 together coordinate Ca(2+). G251 is lipidated: Cholesterol glycine ester.

It belongs to the hedgehog family. As to quaternary structure, interacts with shf. In terms of processing, the C-terminal part of the hedgehog protein precursor displays an autoproteolysis activity that results in the cleavage of the full-length protein into two parts (N-product and C-product). In addition, the C-terminal part displays a cholesterol transferase activity that results by the covalent attachment of a cholesterol moiety to the C-terminal of the newly generated N-product. The N-product is the active species in both local and long-range signaling, whereas the C-product has no signaling activity. Post-translationally, cholesterylation is required for N-product targeting to lipid rafts and multimerization. N-palmitoylation by Rasp of the hedgehog N-product, within the secretory pathway, is required for the embryonic and larval patterning activities of the hedgehog signal.

The protein resides in the nucleus. The protein localises to the cytoplasm. Its subcellular location is the cell membrane. The catalysed reaction is glycyl-L-cysteinyl-[protein] + cholesterol + H(+) = [protein]-C-terminal glycyl cholesterol ester + N-terminal L-cysteinyl-[protein]. Its function is as follows. The C-terminal part of the hedgehog protein precursor displays an autoproteolysis activity that results in the cleavage of the full-length protein into two parts (N-product and C-product). In addition, the C-terminal part displays a cholesterol transferase activity that results by the covalent attachment of a cholesterol moiety to the C-terminal of the newly generated N-product. Once cleaved, the C-product has no signaling activity and diffuses from the cell. The dually lipidated hedgehog protein N-product is a morphogen which is essential for a variety of patterning events during development. Establishes the anterior-posterior axis of the embryonic segments and patterns the larval imaginal disks. Binds to the patched (ptc) receptor, which functions in association with smoothened (smo), to activate the transcription of target genes wingless (wg), decapentaplegic (dpp) and ptc. In the absence of hh, ptc represses the constitutive signaling activity of smo through fused (fu). Essential component of a signaling pathway which regulates the Duox-dependent gut immune response to bacterial uracil; required to activate Cad99C-dependent endosome formation, norpA-dependent Ca2+ mobilization and p38 MAPK, which are essential steps in the Duox-dependent production of reactive oxygen species (ROS) in response to intestinal bacterial infection. During photoreceptor differentiation, it up-regulates transcription of Ubr3, which in turn promotes the hh-signaling pathway by mediating the ubiquitination and degradation of cos. In Drosophila sechellia (Fruit fly), this protein is Protein hedgehog.